Consider the following 360-residue polypeptide: DNA replication and repair protein RecF (360 aa).

30 to 37 (GANGSGKT) serves as a coordination point for ATP.

The protein belongs to the RecF family.

It is found in the cytoplasm. Its function is as follows. The RecF protein is involved in DNA metabolism; it is required for DNA replication and normal SOS inducibility. RecF binds preferentially to single-stranded, linear DNA. It also seems to bind ATP. This is DNA replication and repair protein RecF from Acinetobacter baumannii (strain SDF).